A 99-amino-acid polypeptide reads, in one-letter code: High mobility group nucleosome-binding domain-containing protein 3 (99 aa).

3 stretches are compositionally biased toward basic and acidic residues: residues 1 to 25, 39 to 53, and 62 to 72; these read MPKRKSPENTEDKDGSKVTKQEPTR, PEPKPRKTSAKKEPG, and GKKEEKQEAGK. A disordered region spans residues 1–99; it reads MPKRKSPENT…KTESVDNEGE (99 aa). S6 carries the phosphoserine modification. T10 is modified (phosphothreonine). S78 and S93 each carry phosphoserine. The span at 81-93 shows a compositional bias: basic and acidic residues; the sequence is GETKAEEAQKTES.

Belongs to the HMGN family. Interacts with the ligand binding domain of the thyroid receptor (TR) (in vitro). Requires the presence of thyroid hormone for its interaction. Interacts with transcriptional regulator SEHBP. Interacts with nucleosomes.

It is found in the nucleus. Its function is as follows. Binds to nucleosomes, regulating chromatin structure and consequently, chromatin-dependent processes such as transcription, DNA replication and DNA repair. Affects both insulin and glucagon levels and modulates the expression of pancreatic genes involved in insulin secretion. Regulates the expression of the glucose transporter SLC2A2 by binding specifically to its promoter region and recruiting PDX1 and additional transcription factors. Regulates the expression of SLC6A9, a glycine transporter which regulates the glycine concentration in synaptic junctions in the central nervous system, by binding to its transcription start site. May play a role in ocular development and astrocyte function. This Pongo abelii (Sumatran orangutan) protein is High mobility group nucleosome-binding domain-containing protein 3 (HMGN3).